The following is a 362-amino-acid chain: Serine/threonine-protein kinase SRK2D (362 aa).

The Protein kinase domain maps to 23-279 (YDFVKDIGSG…IPEITSDKWF (257 aa)). ATP contacts are provided by residues 29–37 (IGSGNFGVA) and Lys52. Asp142 serves as the catalytic Proton acceptor.

It belongs to the protein kinase superfamily. Ser/Thr protein kinase family. In terms of assembly, interacts with ABI1. Interacts with I-2, TOPP1 and TOPP2. Interacts with FREE1 (via C-terminus). Expressed in seeds, seedlings, roots (especially in tips), stems, leaves, shoots, flowers and siliques.

It catalyses the reaction L-seryl-[protein] + ATP = O-phospho-L-seryl-[protein] + ADP + H(+). It carries out the reaction L-threonyl-[protein] + ATP = O-phospho-L-threonyl-[protein] + ADP + H(+). In terms of biological role, together with SRK2I, key component and activator of the abscisic acid (ABA) signaling pathway that regulates numerous ABA responses, such as seed germination, Pro accumulation, root growth inhibition, dormancy and seedling growth, and, to a lesser extent, stomatal closure. In response to ABA, phosphorylates the ESCRT-I complex component FREE1, which is required for ABA-induced FREE1 nuclear import. The chain is Serine/threonine-protein kinase SRK2D (SRK2D) from Arabidopsis thaliana (Mouse-ear cress).